A 534-amino-acid polypeptide reads, in one-letter code: Arginine--tRNA ligase (534 aa).

Positions 120 to 130 match the 'HIGH' region motif; the sequence is ANPTGFLHLGH.

It belongs to the class-I aminoacyl-tRNA synthetase family. As to quaternary structure, monomer.

It is found in the cytoplasm. The enzyme catalyses tRNA(Arg) + L-arginine + ATP = L-arginyl-tRNA(Arg) + AMP + diphosphate. The protein is Arginine--tRNA ligase of Mesomycoplasma hyopneumoniae (strain 7448) (Mycoplasma hyopneumoniae).